The following is a 350-amino-acid chain: Ion-translocating oxidoreductase complex subunit D (350 aa).

The next 5 helical transmembrane spans lie at 20–40, 42–62, 68–88, 89–109, and 123–143; these read IMML…WFFG, GTLF…AAVL, PIAA…LAVS, IPPL…VIIA, and PAMI…TSWL. An FMN phosphoryl threonine modification is found at Thr-187. Transmembrane regions (helical) follow at residues 215–235, 244–264, 267–287, 301–321, and 322–342; these read LAGA…VWLL, IPVS…AFAG, LASP…FFIL, LIFG…GGYP, and DGVA…DYYT.

Belongs to the NqrB/RnfD family. The complex is composed of six subunits: RnfA, RnfB, RnfC, RnfD, RnfE and RnfG. Requires FMN as cofactor.

The protein localises to the cell inner membrane. Functionally, part of a membrane-bound complex that couples electron transfer with translocation of ions across the membrane. The protein is Ion-translocating oxidoreductase complex subunit D of Citrobacter koseri (strain ATCC BAA-895 / CDC 4225-83 / SGSC4696).